Consider the following 389-residue polypeptide: Brix domain-containing protein C1B9.03c (389 aa).

One can recognise a Brix domain in the interval 28 to 309 (SMVIRSGASE…LIKITEDAMG (282 aa)). Residues 323-350 (EEIKQQDNFHEQSRALKEKRKKEQDENV) are compositionally biased toward basic and acidic residues. The tract at residues 323–389 (EEIKQQDNFH…EGSSAYSDTE (67 aa)) is disordered. The span at 351–362 (RRKRENKKRRKD) shows a compositional bias: basic residues. Residue S377 is modified to Phosphoserine. Polar residues predominate over residues 379-389 (NEGSSAYSDTE).

This chain is Brix domain-containing protein C1B9.03c, found in Schizosaccharomyces pombe (strain 972 / ATCC 24843) (Fission yeast).